Here is a 777-residue protein sequence, read N- to C-terminus: Phosphoribosylformylglycinamidine synthase subunit PurL (777 aa).

Histidine 50 is a catalytic residue. Positions 53 and 92 each coordinate ATP. Residue glutamate 94 participates in Mg(2+) binding. Substrate-binding positions include 95–98 and arginine 117; that span reads SHNH. Residue histidine 96 is the Proton acceptor of the active site. A Mg(2+)-binding site is contributed by aspartate 118. Residue glutamine 241 coordinates substrate. Residue aspartate 269 participates in Mg(2+) binding. 313 to 315 is a binding site for substrate; the sequence is ESQ. ATP is bound by residues aspartate 516 and glycine 553. Residue asparagine 554 coordinates Mg(2+). Serine 556 serves as a coordination point for substrate.

The protein belongs to the FGAMS family. As to quaternary structure, monomer. Part of the FGAM synthase complex composed of 1 PurL, 1 PurQ and 2 PurS subunits.

Its subcellular location is the cytoplasm. The catalysed reaction is N(2)-formyl-N(1)-(5-phospho-beta-D-ribosyl)glycinamide + L-glutamine + ATP + H2O = 2-formamido-N(1)-(5-O-phospho-beta-D-ribosyl)acetamidine + L-glutamate + ADP + phosphate + H(+). Its pathway is purine metabolism; IMP biosynthesis via de novo pathway; 5-amino-1-(5-phospho-D-ribosyl)imidazole from N(2)-formyl-N(1)-(5-phospho-D-ribosyl)glycinamide: step 1/2. In terms of biological role, part of the phosphoribosylformylglycinamidine synthase complex involved in the purines biosynthetic pathway. Catalyzes the ATP-dependent conversion of formylglycinamide ribonucleotide (FGAR) and glutamine to yield formylglycinamidine ribonucleotide (FGAM) and glutamate. The FGAM synthase complex is composed of three subunits. PurQ produces an ammonia molecule by converting glutamine to glutamate. PurL transfers the ammonia molecule to FGAR to form FGAM in an ATP-dependent manner. PurS interacts with PurQ and PurL and is thought to assist in the transfer of the ammonia molecule from PurQ to PurL. The sequence is that of Phosphoribosylformylglycinamidine synthase subunit PurL from Synechococcus elongatus (strain ATCC 33912 / PCC 7942 / FACHB-805) (Anacystis nidulans R2).